Here is a 461-residue protein sequence, read N- to C-terminus: Ribulose bisphosphate carboxylase (461 aa).

Asn-112 contributes to the substrate binding site. The active-site Proton acceptor is the Lys-167. Substrate is bound at residue Lys-169. The Mg(2+) site is built by Lys-192, Asp-194, and Glu-195. N6-carboxylysine is present on Lys-192. The active-site Proton acceptor is His-288. Arg-289, His-322, and Ser-369 together coordinate substrate.

Belongs to the RuBisCO large chain family. Type II subfamily. As to quaternary structure, homodimer. The cofactor is Mg(2+).

It catalyses the reaction 2 (2R)-3-phosphoglycerate + 2 H(+) = D-ribulose 1,5-bisphosphate + CO2 + H2O. It carries out the reaction D-ribulose 1,5-bisphosphate + O2 = 2-phosphoglycolate + (2R)-3-phosphoglycerate + 2 H(+). Its function is as follows. RuBisCO catalyzes two reactions: the carboxylation of D-ribulose 1,5-bisphosphate, the primary event in carbon dioxide fixation, as well as the oxidative fragmentation of the pentose substrate. Both reactions occur simultaneously and in competition at the same active site. The protein is Ribulose bisphosphate carboxylase of Rhodopseudomonas palustris (strain BisB18).